Here is a 149-residue protein sequence, read N- to C-terminus: MSMVSEFKEFALKGNVMDLAVGVIIGGAFATITKSLVEDVIMPIVAFIVGGEINFKNMFLILGDAPEGVARTNDALKAAGIPVLAYGSFITVLINFLILAFIIFMMVKMVNRLRRADEVEEAIEEAIEEPSEEVQLLREISAKLGNINK.

Helical transmembrane passes span 10–30 (FALK…GAFA), 41–61 (IMPI…MFLI), and 87–107 (GSFI…FMMV).

This sequence belongs to the MscL family. In terms of assembly, homopentamer.

It is found in the cell inner membrane. Functionally, channel that opens in response to stretch forces in the membrane lipid bilayer. May participate in the regulation of osmotic pressure changes within the cell. The polypeptide is Large-conductance mechanosensitive channel (Psychrobacter cryohalolentis (strain ATCC BAA-1226 / DSM 17306 / VKM B-2378 / K5)).